Reading from the N-terminus, the 638-residue chain is Acetolactate synthase 2, chloroplastic (638 aa).

The transit peptide at 1–39 directs the protein to the chloroplast; it reads MATAATAAAALTGATTATPKSRRRAHHLATRRALAAPIR. Positions 44–67 are disordered; it reads SRATPTAPPATPLRPWGPNEPRKG. Residue Glu-112 participates in thiamine diphosphate binding. Cys-132 and Cys-278 are joined by a disulfide. Residues Arg-214, 320–341, and 363–382 contribute to the FAD site; these read HGTV…FGVR and DIDP…ICAD. A thiamine pyrophosphate binding region spans residues 455 to 535; that stretch reads QHQMWAAQYY…VKVFVLNNQH (81 aa). Mg(2+)-binding residues include Asp-506 and Asn-533.

The protein belongs to the TPP enzyme family. Requires Mg(2+) as cofactor. Thiamine diphosphate serves as cofactor.

It localises to the plastid. The protein localises to the chloroplast. The enzyme catalyses 2 pyruvate + H(+) = (2S)-2-acetolactate + CO2. The protein operates within amino-acid biosynthesis; L-isoleucine biosynthesis; L-isoleucine from 2-oxobutanoate: step 1/4. It functions in the pathway amino-acid biosynthesis; L-valine biosynthesis; L-valine from pyruvate: step 1/4. The chain is Acetolactate synthase 2, chloroplastic (ALS2) from Zea mays (Maize).